Here is a 526-residue protein sequence, read N- to C-terminus: D-arabinono-1,4-lactone oxidase (526 aa).

The 175-residue stretch at 19 to 193 (YSAKPERYFQ…VSATIRVVPG (175 aa)) folds into the FAD-binding PCMH-type domain. The residue at position 56 (His-56) is a Pros-8alpha-FAD histidine.

It belongs to the oxygen-dependent FAD-linked oxidoreductase family. As to quaternary structure, monomer. The cofactor is FAD. Post-translationally, the N-terminus is blocked.

Its subcellular location is the mitochondrion membrane. The enzyme catalyses D-arabinono-1,4-lactone + O2 = dehydro-D-arabinono-1,4-lactone + H2O2 + H(+). It participates in cofactor biosynthesis; D-erythroascorbate biosynthesis; dehydro-D-arabinono-1,4-lactone from D-arabinose: step 2/2. Functionally, can oxidize L-gulono-1,4-lactone as well as D-arabinono-1,4-lactone and L-galactono-1,4-lactone. The chain is D-arabinono-1,4-lactone oxidase (ALO1) from Saccharomyces cerevisiae (strain ATCC 204508 / S288c) (Baker's yeast).